Consider the following 380-residue polypeptide: MAPNLRKSHPLLKMVNNSLIDLPTPPNISAWWNFGSLLGICLVTQILTGLLLAMHYTADTSLAFSSVAHTCRNVQYGWLIRNLHANGASLFFICIYLHIGRGFYYGSYLYKETWNTGVILLLTLMATAFVGYVLPWGQMSFWGATVITNLFSAFPYIGQTLVEWAWGGFSVDNPTLTRFFALHFLLPFMIAGLTLIHLTFLHESGSNNPLGIVSNCDKIPFHPYFSLKDFLGFALMLFLLTALALFTPTLLGDPENFTPANPLVTPPHIKPEWYFLFAYAILRSIPNKLGGVLALAASVLVLLLVPFLHKSKQRTMTFRPLSQTLFWILVSNLFILTWIGSQPVEDPFITIGQLASITYFTIILILFPIISSLENKILNY.

Helical transmembrane passes span 34–54 (FGSL…LLAM), 78–99 (WLIR…YLHI), 114–134 (WNTG…GYVL), and 179–199 (FFAL…IHLT). Residues His84 and His98 each contribute to the heme b site. 2 residues coordinate heme b: His183 and His197. A ubiquinone is bound at residue His202. Transmembrane regions (helical) follow at residues 227–247 (LKDF…ALFT), 289–309 (LGGV…PFLH), 321–341 (LSQT…WIGS), and 348–368 (FITI…ILFP).

It belongs to the cytochrome b family. As to quaternary structure, the cytochrome bc1 complex contains 11 subunits: 3 respiratory subunits (MT-CYB, CYC1 and UQCRFS1), 2 core proteins (UQCRC1 and UQCRC2) and 6 low-molecular weight proteins (UQCRH/QCR6, UQCRB/QCR7, UQCRQ/QCR8, UQCR10/QCR9, UQCR11/QCR10 and a cleavage product of UQCRFS1). This cytochrome bc1 complex then forms a dimer. Heme b is required as a cofactor.

The protein localises to the mitochondrion inner membrane. Component of the ubiquinol-cytochrome c reductase complex (complex III or cytochrome b-c1 complex) that is part of the mitochondrial respiratory chain. The b-c1 complex mediates electron transfer from ubiquinol to cytochrome c. Contributes to the generation of a proton gradient across the mitochondrial membrane that is then used for ATP synthesis. In Coracias caudatus (Lilac-breasted roller), this protein is Cytochrome b (MT-CYB).